A 121-amino-acid chain; its full sequence is Large ribosomal subunit protein eL34A (121 aa).

It belongs to the eukaryotic ribosomal protein eL34 family. As to quaternary structure, component of the large ribosomal subunit (LSU). Mature yeast ribosomes consist of a small (40S) and a large (60S) subunit. The 40S small subunit contains 1 molecule of ribosomal RNA (18S rRNA) and 33 different proteins (encoded by 57 genes). The large 60S subunit contains 3 rRNA molecules (25S, 5.8S and 5S rRNA) and 46 different proteins (encoded by 81 genes).

The protein resides in the cytoplasm. Its function is as follows. Component of the ribosome, a large ribonucleoprotein complex responsible for the synthesis of proteins in the cell. The small ribosomal subunit (SSU) binds messenger RNAs (mRNAs) and translates the encoded message by selecting cognate aminoacyl-transfer RNA (tRNA) molecules. The large subunit (LSU) contains the ribosomal catalytic site termed the peptidyl transferase center (PTC), which catalyzes the formation of peptide bonds, thereby polymerizing the amino acids delivered by tRNAs into a polypeptide chain. The nascent polypeptides leave the ribosome through a tunnel in the LSU and interact with protein factors that function in enzymatic processing, targeting, and the membrane insertion of nascent chains at the exit of the ribosomal tunnel. The chain is Large ribosomal subunit protein eL34A from Saccharomyces cerevisiae (strain ATCC 204508 / S288c) (Baker's yeast).